A 172-amino-acid chain; its full sequence is MLSCESFKIKGREIIICVIWEEGIQGIVYSLDGREFLEKQLSRLISMLNKRGVSLSLKERHSKYPELVFNVLTGKISNEEGFEELSLEGLTDFEIRVYSWLVKNVKRGEVITYGKVAKELKTSALAIGGAMKRNPYPIVVPCHRVVGKKDPWLYTPKPEYKKFLLEVEGWTS.

Catalysis depends on Cys-142, which acts as the Nucleophile; methyl group acceptor.

This sequence belongs to the MGMT family.

It is found in the cytoplasm. The enzyme catalyses a 6-O-methyl-2'-deoxyguanosine in DNA + L-cysteinyl-[protein] = S-methyl-L-cysteinyl-[protein] + a 2'-deoxyguanosine in DNA. It catalyses the reaction a 4-O-methyl-thymidine in DNA + L-cysteinyl-[protein] = a thymidine in DNA + S-methyl-L-cysteinyl-[protein]. Involved in the cellular defense against the biological effects of O6-methylguanine (O6-MeG) and O4-methylthymine (O4-MeT) in DNA. Repairs the methylated nucleobase in DNA by stoichiometrically transferring the methyl group to a cysteine residue in the enzyme. This is a suicide reaction: the enzyme is irreversibly inactivated. This Pyrococcus abyssi (strain GE5 / Orsay) protein is Methylated-DNA--protein-cysteine methyltransferase.